We begin with the raw amino-acid sequence, 787 residues long: Endonuclease MutS2 (787 aa).

331–338 serves as a coordination point for ATP; the sequence is GPNTGGKT. Positions 711 to 786 constitute a Smr domain; that stretch reads IDVRGKTSDD…EQGVTVVELK (76 aa).

It belongs to the DNA mismatch repair MutS family. MutS2 subfamily. As to quaternary structure, homodimer. Binds to stalled ribosomes, contacting rRNA.

Its function is as follows. Endonuclease that is involved in the suppression of homologous recombination and thus may have a key role in the control of bacterial genetic diversity. In terms of biological role, acts as a ribosome collision sensor, splitting the ribosome into its 2 subunits. Detects stalled/collided 70S ribosomes which it binds and splits by an ATP-hydrolysis driven conformational change. Acts upstream of the ribosome quality control system (RQC), a ribosome-associated complex that mediates the extraction of incompletely synthesized nascent chains from stalled ribosomes and their subsequent degradation. Probably generates substrates for RQC. The chain is Endonuclease MutS2 from Caldicellulosiruptor bescii (strain ATCC BAA-1888 / DSM 6725 / KCTC 15123 / Z-1320) (Anaerocellum thermophilum).